The primary structure comprises 156 residues: MKLQLIAVGTRMPDWVTRGFEEYQRRFPRDMALELIEIPAGKRGKNADIVRILQKEGEQMLAAIPKGNHIVSLDLPGKNWTTPELATALSKWQLDGRDVSLLVGGPEGLAPACKDAAHQSWCLSALTLPHPLVRIVVAESLYRAWSVNTNHPYHRE.

S-adenosyl-L-methionine is bound by residues Leu-73, Gly-104, and 123 to 128 (LSALTL).

Belongs to the RNA methyltransferase RlmH family. In terms of assembly, homodimer.

The protein localises to the cytoplasm. It catalyses the reaction pseudouridine(1915) in 23S rRNA + S-adenosyl-L-methionine = N(3)-methylpseudouridine(1915) in 23S rRNA + S-adenosyl-L-homocysteine + H(+). Functionally, specifically methylates the pseudouridine at position 1915 (m3Psi1915) in 23S rRNA. This is Ribosomal RNA large subunit methyltransferase H from Shewanella putrefaciens (strain CN-32 / ATCC BAA-453).